We begin with the raw amino-acid sequence, 222 residues long: Small ribosomal subunit protein uS2 (222 aa).

This sequence belongs to the universal ribosomal protein uS2 family.

The chain is Small ribosomal subunit protein uS2 from Karelsulcia muelleri (strain GWSS) (Sulcia muelleri).